The primary structure comprises 1245 residues: TAL effector protein Brg11 (1245 aa).

Disordered regions lie at residues 1–87 (MRIG…LVPE) and 173–205 (CPQA…PTFL). The segment covering 67-87 (PRRPLPVAPASAPPAPSLVPE) has biased composition (pro residues). Residues 185–191 (RSARARR) carry the Nuclear localization signal 1 motif. Residues 286 to 320 (LTRAHIVDIARQRSGDLALQALLPVATALTAAPLR) form a Cryptic repeat -1 repeat. Residues 321 to 354 (LSASQIATVAQYGERPAIQALYRLRRKLTRAPLH) form a Cryptic repeat 0 repeat. 16 Core repeat repeats span residues 355–389 (LTPQ…APYR), 390–424 (LSTE…APYV), 425–459 (LDTE…APYA), 460–494 (LSTE…APYA), 495–529 (LSTE…VPYA), 530–564 (LSTE…APYA), 565–599 (LSTA…APYG), 600–634 (LSTE…APYA), 635–669 (LSTE…APYA), 670–704 (LSTA…APYA), 705–739 (LSTE…APYA), 740–774 (LNTE…APYA), 775–809 (LSTA…APYA), 810–844 (LSTE…APYG), 845–879 (LSTA…TPYD), and 880–914 (LNTA…APYA). Residues 915–948 (LSTAQVVAIACISGQQALEAIEAHMPTLRQASHS) form a Cryptic repeat +1 repeat. The stretch at 949-982 (LSPERVAAIACIGGRSAVEAVRQGLPVKAIRRIR) is one Cryptic repeat +2 repeat. 3 consecutive short sequence motifs (nuclear localization signal) follow at residues 980–983 (RIRR), 1108–1111 (HRKR), and 1145–1148 (RRKR). Residues 1096–1138 (SPGMAGQSACSPHRKRPAETAIAPRSIRRSPNNAGQPSEPWPD) are disordered. The segment at 1237 to 1245 (DWLLQILET) is activation domain.

The protein belongs to the transcription activator-like effector (TALE) family. RipTAL/RTL subfamily.

The protein resides in the secreted. It localises to the host nucleus. Exported into plant cells, where it is targeted to the nucleus and probably acts as a transcription factor. Binds DNA in a sequence-specific manner. May contribute to plant pathogenicity. The sequence is that of TAL effector protein Brg11 from Ralstonia nicotianae (strain ATCC BAA-1114 / GMI1000) (Ralstonia solanacearum).